We begin with the raw amino-acid sequence, 363 residues long: 3-isopropylmalate dehydrogenase (363 aa).

78–91 (GPKWEHLPPDQQPE) contacts NAD(+). Substrate is bound by residues Arg99, Arg109, Arg138, and Asp227. Residues Asp227, Asp251, and Asp255 each coordinate Mg(2+). Residue 285–297 (GSAPDITGKNIAN) coordinates NAD(+).

This sequence belongs to the isocitrate and isopropylmalate dehydrogenases family. LeuB type 1 subfamily. In terms of assembly, homodimer. Mg(2+) is required as a cofactor. Requires Mn(2+) as cofactor.

Its subcellular location is the cytoplasm. The catalysed reaction is (2R,3S)-3-isopropylmalate + NAD(+) = 4-methyl-2-oxopentanoate + CO2 + NADH. The protein operates within amino-acid biosynthesis; L-leucine biosynthesis; L-leucine from 3-methyl-2-oxobutanoate: step 3/4. In terms of biological role, catalyzes the oxidation of 3-carboxy-2-hydroxy-4-methylpentanoate (3-isopropylmalate) to 3-carboxy-4-methyl-2-oxopentanoate. The product decarboxylates to 4-methyl-2 oxopentanoate. This chain is 3-isopropylmalate dehydrogenase, found in Shigella boydii serotype 4 (strain Sb227).